We begin with the raw amino-acid sequence, 103 residues long: UPF0473 protein LVIS_1220 (103 aa).

Belongs to the UPF0473 family.

This Levilactobacillus brevis (strain ATCC 367 / BCRC 12310 / CIP 105137 / JCM 1170 / LMG 11437 / NCIMB 947 / NCTC 947) (Lactobacillus brevis) protein is UPF0473 protein LVIS_1220.